The sequence spans 1292 residues: DNA-directed RNA polymerase subunit beta' (1292 aa).

C70, C72, C85, and C88 together coordinate Zn(2+). D532, D534, and D536 together coordinate Mg(2+). Residues C911, C987, C994, and C997 each contribute to the Zn(2+) site.

The protein belongs to the RNA polymerase beta' chain family. As to quaternary structure, the RNAP catalytic core consists of 2 alpha, 1 beta, 1 beta' and 1 omega subunit. When a sigma factor is associated with the core the holoenzyme is formed, which can initiate transcription. Requires Mg(2+) as cofactor. Zn(2+) is required as a cofactor.

It carries out the reaction RNA(n) + a ribonucleoside 5'-triphosphate = RNA(n+1) + diphosphate. Functionally, DNA-dependent RNA polymerase catalyzes the transcription of DNA into RNA using the four ribonucleoside triphosphates as substrates. The sequence is that of DNA-directed RNA polymerase subunit beta' from Mycoplasma genitalium (strain ATCC 33530 / DSM 19775 / NCTC 10195 / G37) (Mycoplasmoides genitalium).